The following is a 441-amino-acid chain: Asparagine--tRNA ligase, mitochondrial (441 aa).

It belongs to the class-II aminoacyl-tRNA synthetase family.

It localises to the mitochondrion. It catalyses the reaction tRNA(Asn) + L-asparagine + ATP = L-asparaginyl-tRNA(Asn) + AMP + diphosphate + H(+). The polypeptide is Asparagine--tRNA ligase, mitochondrial (slm5) (Schizosaccharomyces pombe (strain 972 / ATCC 24843) (Fission yeast)).